We begin with the raw amino-acid sequence, 262 residues long: 14-3-3 protein epsilon (262 aa).

The disordered stretch occupies residues 236–262; the sequence is QAEEVDPNAGDGEPKEQIQDVEDQDVS. S262 carries the phosphoserine modification.

This sequence belongs to the 14-3-3 family. Homodimer. Interacts with phosphorylated yki. Interacts with pav (when serine phosphorylated); the interaction is necessary for association of the complex pav-14-3-3epsilon complex to the microtubules, thereby inhibiting microtubule sliding.

In terms of biological role, positively regulates Ras-mediated pathways. Acts downstream or parallel to Raf, but upstream of nuclear factors in Ras signaling. Three mutants have been isolated, that suppress the rough eye phenotype caused by mutated Ras1 (sev-Ras1 v12). Inhibits yki activity by restricting its nuclear localization. Together with pav, has a role in the inhibition of microtubule sliding during neurite outgrowth. The sequence is that of 14-3-3 protein epsilon (14-3-3epsilon) from Drosophila melanogaster (Fruit fly).